The chain runs to 68 residues: uncharacterized protein (68 aa).

This is an uncharacterized protein from Haemophilus influenzae (strain ATCC 51907 / DSM 11121 / KW20 / Rd).